Here is a 405-residue protein sequence, read N- to C-terminus: Scarecrow-like protein 23 (405 aa).

The tract at residues Met-1 to Lys-20 is disordered. Positions Glu-31–Lys-400 constitute a GRAS domain. The tract at residues Ile-38 to Ser-102 is leucine repeat I (LRI). The LxCxE motif signature appears at Leu-45–Glu-49. Positions Leu-121–Gly-186 are VHIID. Positions Val-152 to Asp-156 match the VHIID motif. The segment at Ser-196–Ser-228 is leucine repeat II (LRII). The interval Val-238–Asn-327 is PFYRE. An SAW region spans residues Ala-330–Lys-400.

This sequence belongs to the GRAS family. In terms of assembly, interacts with SHR. In terms of tissue distribution, expressed in seedlings, cotyledons, shoot apex, leaves and flowers.

The protein localises to the nucleus. In terms of biological role, probable transcription factor involved in plant development. The protein is Scarecrow-like protein 23 (SCL23) of Arabidopsis thaliana (Mouse-ear cress).